The following is a 171-amino-acid chain: Adenine phosphoribosyltransferase (171 aa).

This sequence belongs to the purine/pyrimidine phosphoribosyltransferase family. As to quaternary structure, homodimer.

It is found in the cytoplasm. The catalysed reaction is AMP + diphosphate = 5-phospho-alpha-D-ribose 1-diphosphate + adenine. It participates in purine metabolism; AMP biosynthesis via salvage pathway; AMP from adenine: step 1/1. In terms of biological role, catalyzes a salvage reaction resulting in the formation of AMP, that is energically less costly than de novo synthesis. The chain is Adenine phosphoribosyltransferase from Trichlorobacter lovleyi (strain ATCC BAA-1151 / DSM 17278 / SZ) (Geobacter lovleyi).